The sequence spans 197 residues: Protein tyrosine phosphatase receptor type C-associated protein (197 aa).

Residues 33-53 (VVTIVLLLLLLLLLVTALALA) traverse the membrane as a helical segment. A phosphoserine mark is found at serine 99 and serine 103. Disordered stretches follow at residues 120–164 (GPEE…GSSA) and 177–197 (SAAW…VTAL). Residues 124 to 145 (AAAKEEEQRCQAEQTRDPRDTD) show a composition bias toward basic and acidic residues.

In terms of assembly, interacts with CD45/PTPRC. In terms of processing, phosphorylated on tyrosine residues. As to expression, leukocyte-specific. Expressed in B- and T-cell lines, in spleen, thymus, and bone marrow of adult mice, and in embryos.

It is found in the membrane. The chain is Protein tyrosine phosphatase receptor type C-associated protein (Ptprcap) from Mus musculus (Mouse).